We begin with the raw amino-acid sequence, 86 residues long: MKNLIAELLFKLAQKEEESKELCAQVEALEIIVTAMLRNMAQNDQQRLIDQVEGALYEVKPDASIPDDDTELLRDYVKKLLRHPRQ.

The stretch at 1–36 (MKNLIAELLFKLAQKEEESKELCAQVEALEIIVTAM) forms a coiled coil.

This sequence belongs to the IraP family. In terms of assembly, interacts with RssB.

It localises to the cytoplasm. Its function is as follows. Inhibits RpoS proteolysis by regulating RssB activity, thereby increasing the stability of the sigma stress factor RpoS especially during phosphate starvation, but also in stationary phase and during nitrogen starvation. Its effect on RpoS stability is due to its interaction with RssB, which probably blocks the interaction of RssB with RpoS, and the consequent delivery of the RssB-RpoS complex to the ClpXP protein degradation pathway. In Escherichia coli O127:H6 (strain E2348/69 / EPEC), this protein is Anti-adapter protein IraP.